The sequence spans 424 residues: Phosphoribosylamine--glycine ligase (424 aa).

The ATP-grasp domain occupies 107–313 (KTFMKKYGIP…FLETLLNFYE (207 aa)). 133–194 (VEKVGAPIVV…EEFLEGEEAS (62 aa)) is an ATP binding site. Mg(2+) is bound by residues Glu283 and Asn285.

The protein belongs to the GARS family. Requires Mg(2+) as cofactor. The cofactor is Mn(2+).

It catalyses the reaction 5-phospho-beta-D-ribosylamine + glycine + ATP = N(1)-(5-phospho-beta-D-ribosyl)glycinamide + ADP + phosphate + H(+). The protein operates within purine metabolism; IMP biosynthesis via de novo pathway; N(1)-(5-phospho-D-ribosyl)glycinamide from 5-phospho-alpha-D-ribose 1-diphosphate: step 2/2. This chain is Phosphoribosylamine--glycine ligase, found in Aquifex aeolicus (strain VF5).